A 366-amino-acid chain; its full sequence is Flagellar P-ring protein (366 aa).

The first 22 residues, Met1–Ala22, serve as a signal peptide directing secretion.

The protein belongs to the FlgI family. In terms of assembly, the basal body constitutes a major portion of the flagellar organelle and consists of four rings (L,P,S, and M) mounted on a central rod.

It is found in the periplasm. Its subcellular location is the bacterial flagellum basal body. Functionally, assembles around the rod to form the L-ring and probably protects the motor/basal body from shearing forces during rotation. This is Flagellar P-ring protein from Hydrogenovibrio crunogenus (strain DSM 25203 / XCL-2) (Thiomicrospira crunogena).